The chain runs to 219 residues: Octanoyltransferase (219 aa).

One can recognise a BPL/LPL catalytic domain in the interval 31–219 (EDLPGFLVFC…KLKRRLLEVL (189 aa)). Substrate-binding positions include 69–76 (RGGRATYH), 153–155 (SVG), and 166–168 (GAA). The active-site Acyl-thioester intermediate is Cys184.

This sequence belongs to the LipB family.

Its subcellular location is the cytoplasm. The enzyme catalyses octanoyl-[ACP] + L-lysyl-[protein] = N(6)-octanoyl-L-lysyl-[protein] + holo-[ACP] + H(+). It participates in protein modification; protein lipoylation via endogenous pathway; protein N(6)-(lipoyl)lysine from octanoyl-[acyl-carrier-protein]: step 1/2. Its function is as follows. Catalyzes the transfer of endogenously produced octanoic acid from octanoyl-acyl-carrier-protein onto the lipoyl domains of lipoate-dependent enzymes. Lipoyl-ACP can also act as a substrate although octanoyl-ACP is likely to be the physiological substrate. The protein is Octanoyltransferase of Bdellovibrio bacteriovorus (strain ATCC 15356 / DSM 50701 / NCIMB 9529 / HD100).